The following is a 340-amino-acid chain: 4-hydroxy-2-oxovalerate aldolase (340 aa).

Residues 5–255 form the Pyruvate carboxyltransferase domain; it reads IVITEVALRD…QTGVDLYKMM (251 aa). Residue 13 to 14 coordinates substrate; the sequence is RD. Asp-14 lines the Mn(2+) pocket. The active-site Proton acceptor is the His-17. Substrate contacts are provided by Ser-167 and His-194. Positions 194 and 196 each coordinate Mn(2+). Tyr-285 is a binding site for substrate.

It belongs to the 4-hydroxy-2-oxovalerate aldolase family.

It catalyses the reaction (S)-4-hydroxy-2-oxopentanoate = acetaldehyde + pyruvate. In Brevibacillus brevis (strain 47 / JCM 6285 / NBRC 100599), this protein is 4-hydroxy-2-oxovalerate aldolase.